Reading from the N-terminus, the 188-residue chain is dCTP deaminase (188 aa).

Residues 111–116, 135–137, glutamine 156, tyrosine 170, lysine 179, and glutamine 180 contribute to the dCTP site; these read KSTYAR and TLE. Catalysis depends on glutamate 137, which acts as the Proton donor/acceptor.

The protein belongs to the dCTP deaminase family. Homotrimer.

It catalyses the reaction dCTP + H2O + H(+) = dUTP + NH4(+). It participates in pyrimidine metabolism; dUMP biosynthesis; dUMP from dCTP (dUTP route): step 1/2. Catalyzes the deamination of dCTP to dUTP. This is dCTP deaminase from Rickettsia akari (strain Hartford).